A 64-amino-acid chain; its full sequence is Large ribosomal subunit protein bL35 (64 aa).

Residues 1–22 are compositionally biased toward basic residues; that stretch reads MPKMKSHTGMGKRVRVTGKGKI. The disordered stretch occupies residues 1–39; that stretch reads MPKMKSHTGMGKRVRVTGKGKIVKQQAGLRHNLEKKPST.

Belongs to the bacterial ribosomal protein bL35 family.

The protein is Large ribosomal subunit protein bL35 of Salinispora arenicola (strain CNS-205).